A 545-amino-acid chain; its full sequence is 2-oxo-Delta(3)-4,5,5-trimethylcyclopentenylacetyl-CoA monooxygenase (545 aa).

FAD is bound by residues Thr20, Glu39, 47-50, 59-60, Tyr65, and Val112; these read TWYW and DT. 57 to 59 serves as a coordination point for NADP(+); the sequence is RLD. NADP(+)-binding positions include 193-199 and 216-217; these read TGATGVQ and RT. Val446 contacts FAD. Trp501 provides a ligand contact to NADP(+).

It belongs to the FAD-binding monooxygenase family. In terms of assembly, homodimer. The cofactor is FAD.

It carries out the reaction [(1R)-2,2,3-trimethyl-5-oxocyclopent-3-enyl]acetyl-CoA + NADPH + O2 + H(+) = [(2R)-3,3,4-trimethyl-6-oxo-3,6-dihydro-1H-pyran-2-yl]acetyl-CoA + NADP(+) + H2O. It participates in terpene metabolism; (R)-camphor degradation. Its function is as follows. Involved in the degradation of (+)-camphor. Catalyzes the lactonization of 2-oxo-delta(3)-4,5, 5-trimethylcyclopentenylacetyl-CoA (OT-CoA), a key intermediate in the metabolism of camphor. 2-Oxocyclopentyl ethyl acetate is also a good substrate, as is 2-oxocyclohexyl ethyl acetate and methyl-substituted cyclohexanones, but free acid is a poor substrate. The polypeptide is 2-oxo-Delta(3)-4,5,5-trimethylcyclopentenylacetyl-CoA monooxygenase (otemo) (Pseudomonas putida (Arthrobacter siderocapsulatus)).